Consider the following 769-residue polypeptide: DNA helicase/primase complex-associated protein (769 aa).

This sequence belongs to the herpesviridae HEPA family. In terms of assembly, associates with the primase and the helicase to form the helicase-primase complex. Interacts with the origin-binding protein. Interacts with the polymerase catalytic subunit.

The protein localises to the host nucleus. Component of the helicase/primase complex. Unwinds the DNA at the replication forks and generates single-stranded DNA for both leading and lagging strand synthesis. The primase synthesizes short RNA primers on the lagging strand that the polymerase presumably elongates using dNTPs. The primase-associated factor has no known catalytic activity in the complex and may serve to facilitate the formation of the replisome by directly interacting with the origin-binding protein and the polymerase. This is DNA helicase/primase complex-associated protein (MDV020) from Gallus gallus (Chicken).